Consider the following 216-residue polypeptide: Ribonuclease HII (216 aa).

Residues 28-216 (DIVCGVDEAG…PVRAALDLIR (189 aa)) form the RNase H type-2 domain. Asp34, Glu35, and Asp126 together coordinate a divalent metal cation.

Belongs to the RNase HII family. It depends on Mn(2+) as a cofactor. The cofactor is Mg(2+).

It localises to the cytoplasm. The catalysed reaction is Endonucleolytic cleavage to 5'-phosphomonoester.. Functionally, endonuclease that specifically degrades the RNA of RNA-DNA hybrids. This is Ribonuclease HII from Burkholderia vietnamiensis (strain G4 / LMG 22486) (Burkholderia cepacia (strain R1808)).